We begin with the raw amino-acid sequence, 445 residues long: UDP-N-acetylmuramoylalanine--D-glutamate ligase (445 aa).

Position 126–132 (glycine 126–threonine 132) interacts with ATP.

Belongs to the MurCDEF family.

It localises to the cytoplasm. The enzyme catalyses UDP-N-acetyl-alpha-D-muramoyl-L-alanine + D-glutamate + ATP = UDP-N-acetyl-alpha-D-muramoyl-L-alanyl-D-glutamate + ADP + phosphate + H(+). It participates in cell wall biogenesis; peptidoglycan biosynthesis. Cell wall formation. Catalyzes the addition of glutamate to the nucleotide precursor UDP-N-acetylmuramoyl-L-alanine (UMA). This Nitratidesulfovibrio vulgaris (strain DSM 19637 / Miyazaki F) (Desulfovibrio vulgaris) protein is UDP-N-acetylmuramoylalanine--D-glutamate ligase.